The following is a 164-amino-acid chain: Peptidyl-prolyl cis-trans isomerase B (164 aa).

Residues 1–162 (MVTFHTNHGD…EDVIIESVTV (162 aa)) form the PPIase cyclophilin-type domain.

It belongs to the cyclophilin-type PPIase family.

The protein resides in the cytoplasm. The enzyme catalyses [protein]-peptidylproline (omega=180) = [protein]-peptidylproline (omega=0). Inhibition by cyclosporin A with a Ki of 25 to 50 mu-mol, a concentration 1000-fold higher than that required for eukaryotic PPIases. PPIases accelerate the folding of proteins. It catalyzes the cis-trans isomerization of proline imidic peptide bonds in oligopeptides. In Escherichia coli (strain K12), this protein is Peptidyl-prolyl cis-trans isomerase B (ppiB).